Consider the following 47-residue polypeptide: Protein YtiD (47 aa).

This Escherichia coli (strain K12) protein is Protein YtiD (ytiD).